We begin with the raw amino-acid sequence, 251 residues long: DNA-directed RNA polymerase III subunit RPC7 (251 aa).

The segment at aspartate 186–phenylalanine 251 is disordered. Position 189 is a phosphoserine (serine 189). Acidic residues-rich tracts occupy residues glycine 203–tyrosine 225 and glycine 234–phenylalanine 251.

Belongs to the eukaryotic RPC7 RNA polymerase subunit family. Component of the RNA polymerase III (Pol III) complex consisting of 17 subunits.

It localises to the nucleus. Functionally, DNA-dependent RNA polymerase catalyzes the transcription of DNA into RNA using the four ribonucleoside triphosphates as substrates. Specific peripheric component of RNA polymerase III which synthesizes small RNAs, such as 5S rRNA and tRNAs. C31 is involved in the formation of the initiation complex. The chain is DNA-directed RNA polymerase III subunit RPC7 (RPC31) from Saccharomyces cerevisiae (strain ATCC 204508 / S288c) (Baker's yeast).